Here is a 187-residue protein sequence, read N- to C-terminus: Elongation factor P (187 aa).

This sequence belongs to the elongation factor P family.

It is found in the cytoplasm. It functions in the pathway protein biosynthesis; polypeptide chain elongation. In terms of biological role, involved in peptide bond synthesis. Stimulates efficient translation and peptide-bond synthesis on native or reconstituted 70S ribosomes in vitro. Probably functions indirectly by altering the affinity of the ribosome for aminoacyl-tRNA, thus increasing their reactivity as acceptors for peptidyl transferase. The protein is Elongation factor P of Mycobacterium avium (strain 104).